The primary structure comprises 292 residues: Small ribosomal subunit biogenesis GTPase RsgA (292 aa).

A CP-type G domain is found at 64 to 221; it reads RSELFRPAVA…LVDTPGFSSL (158 aa). GTP contacts are provided by residues 113–116 and 164–172; these read NKMD and GPSGVGKST. Residues Cys-245, Cys-250, His-252, and Cys-258 each coordinate Zn(2+).

Belongs to the TRAFAC class YlqF/YawG GTPase family. RsgA subfamily. Monomer. Associates with 30S ribosomal subunit, binds 16S rRNA. The cofactor is Zn(2+).

The protein localises to the cytoplasm. One of several proteins that assist in the late maturation steps of the functional core of the 30S ribosomal subunit. Helps release RbfA from mature subunits. May play a role in the assembly of ribosomal proteins into the subunit. Circularly permuted GTPase that catalyzes slow GTP hydrolysis, GTPase activity is stimulated by the 30S ribosomal subunit. In Clostridium botulinum (strain 657 / Type Ba4), this protein is Small ribosomal subunit biogenesis GTPase RsgA.